We begin with the raw amino-acid sequence, 143 residues long: SsrA-binding protein (143 aa).

Belongs to the SmpB family.

Its subcellular location is the cytoplasm. Required for rescue of stalled ribosomes mediated by trans-translation. Binds to transfer-messenger RNA (tmRNA), required for stable association of tmRNA with ribosomes. tmRNA and SmpB together mimic tRNA shape, replacing the anticodon stem-loop with SmpB. tmRNA is encoded by the ssrA gene; the 2 termini fold to resemble tRNA(Ala) and it encodes a 'tag peptide', a short internal open reading frame. During trans-translation Ala-aminoacylated tmRNA acts like a tRNA, entering the A-site of stalled ribosomes, displacing the stalled mRNA. The ribosome then switches to translate the ORF on the tmRNA; the nascent peptide is terminated with the 'tag peptide' encoded by the tmRNA and targeted for degradation. The ribosome is freed to recommence translation, which seems to be the essential function of trans-translation. The sequence is that of SsrA-binding protein from Mycoplasmopsis synoviae (strain 53) (Mycoplasma synoviae).